We begin with the raw amino-acid sequence, 359 residues long: Fructose-bisphosphate aldolase (359 aa).

Ser50 serves as a coordination point for D-glyceraldehyde 3-phosphate. Catalysis depends on Asp83, which acts as the Proton donor. The Zn(2+) site is built by His84, Asp105, Glu142, and His198. Gly199 serves as a coordination point for dihydroxyacetone phosphate. Residue His232 participates in Zn(2+) binding. Dihydroxyacetone phosphate contacts are provided by residues 233 to 235 and 275 to 278; these read GSS and NIDT.

It belongs to the class II fructose-bisphosphate aldolase family. It depends on Zn(2+) as a cofactor.

The enzyme catalyses beta-D-fructose 1,6-bisphosphate = D-glyceraldehyde 3-phosphate + dihydroxyacetone phosphate. It participates in carbohydrate degradation; glycolysis; D-glyceraldehyde 3-phosphate and glycerone phosphate from D-glucose: step 4/4. Functionally, catalyzes the aldol condensation of dihydroxyacetone phosphate (DHAP or glycerone-phosphate) with glyceraldehyde 3-phosphate (G3P) to form fructose 1,6-bisphosphate (FBP) in gluconeogenesis and the reverse reaction in glycolysis. This chain is Fructose-bisphosphate aldolase (fba), found in Nostoc commune.